The following is a 354-amino-acid chain: Glycerol-1-phosphate dehydrogenase [NAD(P)+] (354 aa).

NAD(+) contacts are provided by residues Gly103 to Asp107 and Thr125 to Ser128. Asp130 provides a ligand contact to substrate. NAD(+) is bound at residue Ser134. Asp176 is a binding site for substrate. Zn(2+) is bound by residues Asp176 and His255. His259 lines the substrate pocket. Residue His271 participates in Zn(2+) binding.

Belongs to the glycerol-1-phosphate dehydrogenase family. As to quaternary structure, homodimer. Requires Zn(2+) as cofactor.

Its subcellular location is the cytoplasm. It carries out the reaction sn-glycerol 1-phosphate + NAD(+) = dihydroxyacetone phosphate + NADH + H(+). The catalysed reaction is sn-glycerol 1-phosphate + NADP(+) = dihydroxyacetone phosphate + NADPH + H(+). It functions in the pathway membrane lipid metabolism; glycerophospholipid metabolism. Catalyzes the NAD(P)H-dependent reduction of dihydroxyacetonephosphate (DHAP or glycerone phosphate) to glycerol 1-phosphate (G1P). The G1P thus generated is used as the glycerophosphate backbone of phospholipids in the cellular membranes of Archaea. The chain is Glycerol-1-phosphate dehydrogenase [NAD(P)+] from Nitrosopumilus maritimus (strain SCM1).